A 363-amino-acid chain; its full sequence is Zinc finger protein 830 (363 aa).

Ala-2 is modified (N-acetylalanine). A coiled-coil region spans residues 16–40; the sequence is VNQEELRRLMREKQRLSTNRKRIES. The segment at 53-75 adopts a C2H2-type zinc-finger fold; it reads CALCNTPVKSELLWQTHVLGKQH. A disordered region spans residues 81–213; the sequence is ELKGAKGATQ…NPPKAPLVPH (133 aa). A compositionally biased stretch (polar residues) spans 90–99; the sequence is QGPSTGTVPQ. Residues 104–115 show a composition bias toward basic and acidic residues; the sequence is RATDVESQDAKK. A compositionally biased stretch (low complexity) spans 129-143; sequence SASSANLDAARAAPS. Positions 152–164 are enriched in acidic residues; the sequence is DYDDEEEEEEEGG. A compositionally biased stretch (basic and acidic residues) spans 165–184; it reads GEERRDSSKHLPDAQGKEHS. Polar residues predominate over residues 189-205; it reads RETTSNVLPNDPFNTNP. Ser-216 bears the Phosphoserine mark. Residues 303–331 are a coiled coil; it reads IECYRRVEKLRNRQDEIKNKLKEVLTIKE. Ser-342 and Ser-353 each carry phosphoserine.

In terms of assembly, component of the XAB2 complex, a multimeric protein complex composed of XAB2, PRPF19, AQR, ZNF830, ISY1, and PPIE; this complex binds preferentially to RNA. Interacts with XAB2. Identified in a pentameric intron-binding (IB) complex composed of AQR, XAB2, ISY1, ZNF830 and PPIE that is incorporated into the spliceosome as a preassembled complex. The IB complex does not contain PRPF19. Post-translationally, phosphorylated in response to DNA damage by the cell cycle checkpoint kinases ATR/ATM. As to expression, widely expressed at low level. Expressed in oocytes from primordial to antral follicles. Also detected in somatic cells of the ovary, namely, in granulosa cells from the pre-antral follicle stage onward.

The protein resides in the nucleus. It localises to the chromosome. It is found in the nucleus speckle. May play a role in pre-mRNA splicing as component of the spliceosome. Acts as an important regulator of the cell cycle that participates in the maintenance of genome integrity. During cell cycle progression in embryonic fibroblast, prevents replication fork collapse, double-strand break formation and cell cycle checkpoint activation. Controls mitotic cell cycle progression and cell survival in rapidly proliferating intestinal epithelium and embryonic stem cells. During the embryo preimplantation, controls different aspects of M phase. During early oocyte growth, plays a role in oocyte survival by preventing chromosomal breaks formation, activation of TP63 and reduction of transcription. This Mus musculus (Mouse) protein is Zinc finger protein 830.